We begin with the raw amino-acid sequence, 427 residues long: L-rhamnose isomerase (427 aa).

Mn(2+)-binding residues include H264, D296, and D298.

Belongs to the rhamnose isomerase family. The cofactor is Mn(2+).

It localises to the cytoplasm. The catalysed reaction is L-rhamnopyranose = L-rhamnulose. Its pathway is carbohydrate degradation; L-rhamnose degradation; glycerone phosphate from L-rhamnose: step 1/3. In terms of biological role, catalyzes the interconversion of L-rhamnose and L-rhamnulose. This chain is L-rhamnose isomerase, found in Rhodopirellula baltica (strain DSM 10527 / NCIMB 13988 / SH1).